A 449-amino-acid polypeptide reads, in one-letter code: Gamma-glutamyl phosphate reductase (449 aa).

The protein belongs to the gamma-glutamyl phosphate reductase family.

The protein localises to the cytoplasm. The catalysed reaction is L-glutamate 5-semialdehyde + phosphate + NADP(+) = L-glutamyl 5-phosphate + NADPH + H(+). It participates in amino-acid biosynthesis; L-proline biosynthesis; L-glutamate 5-semialdehyde from L-glutamate: step 2/2. Its function is as follows. Catalyzes the NADPH-dependent reduction of L-glutamate 5-phosphate into L-glutamate 5-semialdehyde and phosphate. The product spontaneously undergoes cyclization to form 1-pyrroline-5-carboxylate. The sequence is that of Gamma-glutamyl phosphate reductase from Methanococcoides burtonii (strain DSM 6242 / NBRC 107633 / OCM 468 / ACE-M).